Consider the following 267-residue polypeptide: DNA repair protein RecO (267 aa).

The protein belongs to the RecO family.

In terms of biological role, involved in DNA repair and RecF pathway recombination. The sequence is that of DNA repair protein RecO from Mesoplasma florum (strain ATCC 33453 / NBRC 100688 / NCTC 11704 / L1) (Acholeplasma florum).